The chain runs to 368 residues: Chorismate synthase (368 aa).

Positions 48 and 54 each coordinate NADP(+). FMN contacts are provided by residues 125-127, 238-239, G278, 293-297, and R319; these read RSS, NA, and KPTSS.

It belongs to the chorismate synthase family. In terms of assembly, homotetramer. It depends on FMNH2 as a cofactor.

It carries out the reaction 5-O-(1-carboxyvinyl)-3-phosphoshikimate = chorismate + phosphate. It participates in metabolic intermediate biosynthesis; chorismate biosynthesis; chorismate from D-erythrose 4-phosphate and phosphoenolpyruvate: step 7/7. In terms of biological role, catalyzes the anti-1,4-elimination of the C-3 phosphate and the C-6 proR hydrogen from 5-enolpyruvylshikimate-3-phosphate (EPSP) to yield chorismate, which is the branch point compound that serves as the starting substrate for the three terminal pathways of aromatic amino acid biosynthesis. This reaction introduces a second double bond into the aromatic ring system. The chain is Chorismate synthase from Methylibium petroleiphilum (strain ATCC BAA-1232 / LMG 22953 / PM1).